The primary structure comprises 99 residues: Complement inhibitor RaCI7 (99 aa).

Positions 1 to 24 are cleaved as a signal peptide; the sequence is MAALNGLVLLLLTISAMFISECYS. Cystine bridges form between Cys37-Cys61, Cys42-Cys63, and Cys57-Cys78.

The protein belongs to the RaCI family. In terms of tissue distribution, expressed in salivary glands.

It localises to the secreted. Complement inhibitor. Prevents complement-mediated C5 activation by binding to C5. Binds C5 at a different binding site than the other tick complement inhibitors OmCI and CirpT1, and the drug eculizumab. The protein is Complement inhibitor RaCI7 of Dermacentor andersoni (Rocky mountain wood tick).